The sequence spans 966 residues: Mitogen-activated protein kinase kinase kinase 13 (966 aa).

Disordered stretches follow at residues 1-22 (MANF…SESK), 30-49 (ELTA…QQEK), and 90-114 (HDES…SGTE). The segment covering 95-113 (TAVSQGNSNTVDGESTSGT) has biased composition (polar residues). A Protein kinase domain is found at 168–409 (ISELQWLGSG…FRQTLMHLDI (242 aa)). ATP is bound by residues 174–182 (LGSGAQGAV) and Lys195. Asp279 serves as the catalytic Proton acceptor. Leucine-zipper stretches follow at residues 433-454 (VKKH…DEEL) and 486-507 (LSAI…EQAV). Disordered regions lie at residues 534 to 599 (KRKG…RGSH), 611 to 655 (AQEN…HHPR), 744 to 834 (DIPS…RRQR), and 846 to 908 (STFS…GLSD). The segment covering 567–581 (SPLSGSPKMSTSSSK) has biased composition (low complexity). A compositionally biased stretch (basic residues) spans 582 to 594 (SRYRSKPRHRRGN). Composition is skewed to polar residues over residues 611 to 629 (AQEN…SQYP) and 785 to 795 (RSESSLGTSHL). The span at 814–827 (DSSEEEEGEVDSEV) shows a compositional bias: acidic residues. The interval 815-828 (SSEEEEGEVDSEVE) is acidic. Positions 846–855 (STFSSENFSV) are enriched in polar residues. A compositionally biased stretch (basic and acidic residues) spans 873–887 (LADKLEDRLAEKLDD).

This sequence belongs to the protein kinase superfamily. STE Ser/Thr protein kinase family. MAP kinase kinase kinase subfamily. Homodimer; forms dimers through the leucine-zipper motif. Interacts with the C-terminus of MAPK8IP1 through the kinase catalytic domain. Binds PRDX3. Associates with the IKK complex through the kinase domain. It depends on Mg(2+) as a cofactor. Autophosphorylated on serine and threonine residues. In terms of tissue distribution, expressed in the adult brain, liver, placenta and pancreas, with expression strongest in the pancreas.

It localises to the cytoplasm. Its subcellular location is the membrane. The catalysed reaction is L-seryl-[protein] + ATP = O-phospho-L-seryl-[protein] + ADP + H(+). It catalyses the reaction L-threonyl-[protein] + ATP = O-phospho-L-threonyl-[protein] + ADP + H(+). Its activity is regulated as follows. Activated by autophosphorylation and homodimerization. In terms of biological role, activates the JUN N-terminal pathway through activation of the MAP kinase kinase MAP2K7. Acts synergistically with PRDX3 to regulate the activation of NF-kappa-B in the cytosol. This activation is kinase-dependent and involves activating the IKK complex, the IKBKB-containing complex that phosphorylates inhibitors of NF-kappa-B. The chain is Mitogen-activated protein kinase kinase kinase 13 from Homo sapiens (Human).